A 221-amino-acid polypeptide reads, in one-letter code: Anti-sigma-W factor RsiW (221 aa).

At 1-87 (MKTCHSHDEL…AKWKLKAKRH (87 aa)) the chain is on the cytoplasmic side. Positions 30, 34, and 37 each coordinate Zn(2+). The chain crosses the membrane as a helical span at residues 88-108 (PILVAAAIFLIMMSAAFFSAW). The Extracellular segment spans residues 109–221 (SHTTDGIAVS…GEDDPHSTDN (113 aa)).

This sequence belongs to the zinc-associated anti-sigma factor (ZAS) superfamily. Anti-sigma-W factor family. Zn(2+) is required as a cofactor. In terms of processing, is processed by three successive proteolytic events. First, the extracellular region of RsiW is cleaved by PrsW (Site-1 cleavage) in response to cell envelope stresses. Next, it undergoes cleavage at an intramembrane site (Site-2 cleavage) mediated by RasP. This cleavage uncovers a cryptic proteolytic tag with conserved alanine residues in the transmembrane segment, that is recognized mainly by the ClpXP protease, which completely degrades the protein in the cytoplasm and leads to the induction of the sigma-W-controlled genes.

The protein resides in the membrane. Its function is as follows. Is the anti-sigma factor for SigW. The presence of RsiW leads to the inactivation of SigW, and its proteolytic destruction to sigma-W activation. The protein is Anti-sigma-W factor RsiW (rsiW) of Shouchella clausii (strain KSM-K16) (Alkalihalobacillus clausii).